A 100-amino-acid polypeptide reads, in one-letter code: Small ribosomal subunit protein uS14c (100 aa).

Belongs to the universal ribosomal protein uS14 family. In terms of assembly, part of the 30S ribosomal subunit.

Its subcellular location is the plastid. The protein localises to the chloroplast. Its function is as follows. Binds 16S rRNA, required for the assembly of 30S particles. The chain is Small ribosomal subunit protein uS14c from Angiopteris evecta (Mule's foot fern).